The primary structure comprises 239 residues: Large ribosomal subunit protein uL1 (239 aa).

The protein belongs to the universal ribosomal protein uL1 family. As to quaternary structure, part of the 50S ribosomal subunit.

Functionally, binds directly to 23S rRNA. The L1 stalk is quite mobile in the ribosome, and is involved in E site tRNA release. In terms of biological role, protein L1 is also a translational repressor protein, it controls the translation of the L11 operon by binding to its mRNA. This is Large ribosomal subunit protein uL1 from Acidothermus cellulolyticus (strain ATCC 43068 / DSM 8971 / 11B).